The primary structure comprises 167 residues: NADH-quinone oxidoreductase subunit E (167 aa).

4 residues coordinate [2Fe-2S] cluster: cysteine 91, cysteine 96, cysteine 132, and cysteine 136.

This sequence belongs to the complex I 24 kDa subunit family. The cofactor is [2Fe-2S] cluster.

It carries out the reaction a quinone + NADH + 5 H(+)(in) = a quinol + NAD(+) + 4 H(+)(out). Its function is as follows. NDH-1 shuttles electrons from NADH, via FMN and iron-sulfur (Fe-S) centers, to quinones in the respiratory chain. Couples the redox reaction to proton translocation (for every two electrons transferred, four hydrogen ions are translocated across the cytoplasmic membrane), and thus conserves the redox energy in a proton gradient. This chain is NADH-quinone oxidoreductase subunit E (nuoE), found in Rickettsia conorii (strain ATCC VR-613 / Malish 7).